Reading from the N-terminus, the 526-residue chain is Importin subunit alpha-1a (526 aa).

The IBB domain maps to 1-58 (MSLRPSERVEVRRNRYKVAVDAEEGRRRREDNMVEIRKSRREESLLKKRREGLQAQAP). ARM repeat units follow at residues 105-145 (SPPI…NIAS), 148-187 (SENTKVVIDHGAVPIFVKLLGSSSDDVREQAVWALGNVAG), 190-230 (PKCR…NFCR), 232-271 (KPQPSFEQTRPALPALARLIHSNDEEVLTDACWALSYLSD), 274-313 (NDKIQAVIEAGVCPRLVELLLHPSPSVLIPALRTVGNIVT), 316-356 (DAQT…NITA), 359-398 (KDQIQAVINAGIIGPLVNLLQTAEFDIKKEAAWAISNATS), and 402-441 (HDQIKYLVSEGCIKPLCDLLICPDIRIVTVCLEGLENILK).

The protein belongs to the importin alpha family. In terms of assembly, forms a complex with importin subunit beta-1. The whole complex, most stable and composed of importin alpha, importin beta and NLS substrate, is referred to as PTAC or pore targeting complex. Interacts with mungbean yellow mosaic virus capsid protein. In terms of tissue distribution, highly expressed in callus, followed by root and etiolated leaf. Low expression in green leaf.

It localises to the cytoplasm. Its subcellular location is the perinuclear region. Its function is as follows. Functions in nuclear protein import. Binds specifically and directly to substrates containing either a simple or bipartite NLS motif. Promotes docking of import substrates to the nuclear envelope. The sequence is that of Importin subunit alpha-1a from Oryza sativa subsp. japonica (Rice).